Consider the following 880-residue polypeptide: MLLILELLVLIIGLGVALPVQTHNLTDNQGFDEESSQWISPHYYPTPQGGRLQGVWQDAYTKAKALVSQMTIVEKVNLTTGTGWQLGPCVGNTGSVPRFGIPNLCLQDGPLGVRLTDFSTGYPSGMATGATFNKDLFLQRGQALGHEFNSKGVHIALGPAVGPLGVKARGGRNFEAFGSDPYLQGIAAAATIKGLQENNVMACVKHFIGNEQDIYRQPSNSKVDPEYDPATKESISANIPDRAMHELYLWPFADSIRAGVGSVMCSYNRVNNTYSCENSYMINHLLKEELGFQGFVVSDWAAQMSGAYSAISGLDMSMPGELLGGWNTGKSYWGQNLTKAVYNETVPIERLDDMATRILAALYATNSFPTKDRLPNFSSFTTKEYGNEFFVDKTSPVVKVNHFVDPSNDFTEDTALKVAEESIVLLKNEKNTLPISPNKVRKLLLSGIAAGPDPKGYECSDQSCVDGALFEGWGSGSVGYPKYQVTPFEEISANARKNKMQFDYIRESFDLTQVSTVASDAHMSIVVVSAVSGEGYLIIDGNRGDKNNVTLWHNSDNLIKAVAENCANTVVVITSTGQVDVESFADHPNVTAIVWAGPLGDRSGTAIANILFGNANPSGHLPFTVAKSNDDYIPIVTYNPPNGEPEDNTLAEHDLLVDYRYFEEKNIEPRYAFGYGLSYNEYKVSNAKVSAAKKVDEELPQPKLYLAEYSYNKTEEINNPEDAFFPSNARRIQEFLYPYLDSNVTLKDGNYEYPDGYSTEQRTTPIQPGGGLGGNDALWEVAYKVEVDVQNLGNSTDKFVPQLYLKHPEDGKFETPVQLRGFEKVELSPGEKKTVEFELLRRDLSVWDTTRQSWIVESGTYEALIGVAVNDIKTSVLFTI.

Residues 1–17 (MLLILELLVLIIGLGVA) form the signal peptide. N-linked (GlcNAc...) asparagine glycans are attached at residues Asn-24, Asn-77, and Asn-271. Residue Asp-299 is part of the active site. Residues Asn-336, Asn-343, Asn-376, Asn-548, Asn-589, Asn-712, Asn-743, and Asn-794 are each glycosylated (N-linked (GlcNAc...) asparagine).

This sequence belongs to the glycosyl hydrolase 3 family.

It catalyses the reaction Hydrolysis of terminal, non-reducing beta-D-glucosyl residues with release of beta-D-glucose.. It functions in the pathway glycan metabolism; cellulose degradation. The chain is Beta-glucosidase 2 (BGL2) from Saccharomycopsis fibuligera (Yeast).